The following is a 593-amino-acid chain: Solute carrier family 40 member 3, chloroplastic (593 aa).

The interval Met-1–Pro-23 is disordered. A chloroplast-targeting transit peptide spans Met-1 to Ser-51. The segment covering Ser-8–Pro-17 has biased composition (pro residues). Helical transmembrane passes span Ile-181 to Leu-201, Ala-219 to Val-239, Phe-253 to Ile-273, Leu-303 to Pro-322, Leu-323 to Leu-343, Tyr-403 to Ile-423, Val-431 to Ala-451, Ala-462 to Leu-482, Leu-493 to Ile-513, Ile-530 to Val-550, and His-557 to Cys-577.

The protein belongs to the ferroportin (FP) (TC 2.A.100) family. SLC40A subfamily.

The protein localises to the membrane. The protein resides in the plastid. Its subcellular location is the chloroplast envelope. May be involved in iron transport and iron homeostasis. In Oryza sativa subsp. japonica (Rice), this protein is Solute carrier family 40 member 3, chloroplastic.